A 291-amino-acid chain; its full sequence is 4-hydroxy-tetrahydrodipicolinate synthase (291 aa).

Position 45 (threonine 45) interacts with pyruvate. The Proton donor/acceptor role is filled by tyrosine 133. Lysine 161 (schiff-base intermediate with substrate) is an active-site residue. Isoleucine 203 serves as a coordination point for pyruvate.

It belongs to the DapA family. In terms of assembly, homotetramer; dimer of dimers.

The protein localises to the cytoplasm. The catalysed reaction is L-aspartate 4-semialdehyde + pyruvate = (2S,4S)-4-hydroxy-2,3,4,5-tetrahydrodipicolinate + H2O + H(+). The protein operates within amino-acid biosynthesis; L-lysine biosynthesis via DAP pathway; (S)-tetrahydrodipicolinate from L-aspartate: step 3/4. Its function is as follows. Catalyzes the condensation of (S)-aspartate-beta-semialdehyde [(S)-ASA] and pyruvate to 4-hydroxy-tetrahydrodipicolinate (HTPA). In Acidithiobacillus ferrooxidans (strain ATCC 23270 / DSM 14882 / CIP 104768 / NCIMB 8455) (Ferrobacillus ferrooxidans (strain ATCC 23270)), this protein is 4-hydroxy-tetrahydrodipicolinate synthase.